The following is a 1571-amino-acid chain: Phospholipid-transporting ATPase DNF1 (1571 aa).

Residues Met1–Thr94 are disordered. Topologically, residues Met1–Gln214 are cytoplasmic. Positions Glu29–Asp40 are enriched in basic and acidic residues. A compositionally biased stretch (polar residues) spans Ala42–Asp56. A Phosphoserine modification is found at Ser53. The span at Ala66–Glu76 shows a compositional bias: acidic residues. Thr70 bears the Phosphothreonine mark. A compositionally biased stretch (polar residues) spans His80–Gly93. Ser81 carries the phosphoserine modification. Thr85 is modified (phosphothreonine). Ser92 bears the Phosphoserine mark. Thr94 carries the post-translational modification Phosphothreonine. At Ser104 the chain carries Phosphoserine. Thr109 is subject to Phosphothreonine. Residues Phe215–Phe235 form a helical membrane-spanning segment. The tract at residues Ile234–Gly241 is involved in phosphatidylcholine substrate selection. Residues Gly236–Asn239 lie on the Extracellular side of the membrane. Residues Pro240 to Ile260 form a helical membrane-spanning segment. Over Glu261–Val553 the chain is Cytoplasmic. A phosphoserine mark is found at Ser351, Ser354, Ser358, and Ser365. At Tyr368 the chain carries Phosphotyrosine. The chain crosses the membrane as a helical span at residues Val554–Tyr574. Residues Tyr575 to Ala594 lie on the Extracellular side of the membrane. The involved in phosphatidylcholine substrate selection stretch occupies residues Glu586–Ile590. The helical transmembrane segment at Ala595 to Ile615 threads the bilayer. The Cytoplasmic portion of the chain corresponds to Ser616–Ile1188. The active-site 4-aspartylphosphate intermediate is Asp667. Asp667, Lys668, Thr669, Glu801, Phe842, Ser844, Lys847, and Lys871 together coordinate ATP. Mg(2+) is bound at residue Asp667. Thr669 provides a ligand contact to Mg(2+). Residue Lys895 forms a Glycyl lysine isopeptide (Lys-Gly) (interchain with G-Cter in ubiquitin) linkage. Residues Arg909, Thr910, Thr989, Gly990, Asp991, Arg1104, and Lys1110 each coordinate ATP. Asp1130 provides a ligand contact to Mg(2+). The ATP site is built by Asn1133 and Asp1134. Asp1134 is a binding site for Mg(2+). The chain crosses the membrane as a helical span at residues Pro1189–Asn1209. Residues Asp1210–Tyr1219 are Extracellular-facing. Residues Thr1220 to Leu1240 traverse the membrane as a helical segment. Over Asp1241–Phe1270 the chain is Cytoplasmic. The helical transmembrane segment at Leu1271–Val1291 threads the bilayer. At Tyr1292–His1307 the chain is on the extracellular side. The chain crosses the membrane as a helical span at residues Arg1308 to Leu1328. At Leu1329 to Trp1334 the chain is on the cytoplasmic side. Residues Asp1335–Ile1355 form a helical membrane-spanning segment. Over Trp1356–Ala1375 the chain is Extracellular. The helical transmembrane segment at Pro1376–Tyr1396 threads the bilayer. Arg1393 is a binding site for a 1,2-diacyl-sn-glycero-3-phospho-L-serine. Residues Asp1397–Asn1571 are Cytoplasmic-facing. Position 1506 is a phosphoserine (Ser1506). Thr1551 is modified (phosphothreonine). A phosphoserine mark is found at Ser1552 and Ser1563.

It belongs to the cation transport ATPase (P-type) (TC 3.A.3) family. Type IV subfamily. Component of a flippase complex consisting of DNF1 and LEM3. Interacts with LEM3; the interaction is direct and required for their mutual export from the endoplasmic reticulum. The cofactor is Mg(2+). In terms of processing, phosphorylated by FPK1 and KIN82.

It localises to the cell membrane. Its subcellular location is the endosome membrane. The protein localises to the golgi apparatus. The protein resides in the trans-Golgi network membrane. It is found in the cell septum. It localises to the bud. It carries out the reaction ATP + H2O + phospholipidSide 1 = ADP + phosphate + phospholipidSide 2.. The enzyme catalyses a 1,2-diacyl-sn-glycero-3-phosphoethanolamine(out) + ATP + H2O = a 1,2-diacyl-sn-glycero-3-phosphoethanolamine(in) + ADP + phosphate + H(+). It catalyses the reaction a 1,2-diacyl-sn-glycero-3-phosphocholine(out) + ATP + H2O = a 1,2-diacyl-sn-glycero-3-phosphocholine(in) + ADP + phosphate + H(+). The catalysed reaction is a beta-D-glucosyl-(1&lt;-&gt;1')-N-acylsphing-4-enine(out) + ATP + H2O = a beta-D-glucosyl-(1&lt;-&gt;1')-N-acylsphing-4-enine(in) + ADP + phosphate + H(+). It carries out the reaction a 1,2-diacyl-sn-glycero-3-phospho-L-serine(out) + ATP + H2O = a 1,2-diacyl-sn-glycero-3-phospho-L-serine(in) + ADP + phosphate + H(+). Functionally, catalytic component of a P4-ATPase flippase complex which catalyzes the hydrolysis of ATP coupled to the transport of glucosylceramide, phosphatidylcholine, phosphatidylethanolamine, and small amounts of phosphatidylserine from the lumenal to the cytosolic leaflet of the cell membrane and ensures the maintenance of asymmetric distribution of phospholipids. Does not appear to transport sphingomyelin, inositol phosphoceramide, or phosphatidic acid. Required for efficient endocytosis. In Saccharomyces cerevisiae (strain ATCC 204508 / S288c) (Baker's yeast), this protein is Phospholipid-transporting ATPase DNF1.